We begin with the raw amino-acid sequence, 218 residues long: Large ribosomal subunit protein uL3 (218 aa).

This sequence belongs to the universal ribosomal protein uL3 family. Part of the 50S ribosomal subunit. Forms a cluster with proteins L14 and L19.

One of the primary rRNA binding proteins, it binds directly near the 3'-end of the 23S rRNA, where it nucleates assembly of the 50S subunit. The protein is Large ribosomal subunit protein uL3 of Corynebacterium diphtheriae (strain ATCC 700971 / NCTC 13129 / Biotype gravis).